Consider the following 235-residue polypeptide: MEGAKRADANLLTDTGTESSPRSPVCSLRHFACEQNLLSRPDGSASFLQGDTSVLAGVYGPAEVKVSKEIFNKATLEVILRPKIGLPGVAEKSRERLVRNTCEAVVLGALHPRTSITVVLQVVSDAGSLLACCLNAACMALVDAGVPMRALFCGVTCALDSDGNLVLDPTTKQEKEARAILTFALDSAEQKLLMSTTKGLYSDAELQQCLAAAQAASQHIFRFYRESLQRRYSKS.

The segment at 1–21 (MEGAKRADANLLTDTGTESSP) is disordered. A compositionally biased stretch (polar residues) spans 12-21 (LTDTGTESSP). Serine 20 and serine 23 each carry phosphoserine.

The protein belongs to the RNase PH family. As to quaternary structure, homodimer. Component of the RNA exosome core complex (Exo-9), composed of EXOSC1, EXOSC2, EXOSC3, EXOSC4, EXOSC5, EXOSC6, EXOSC7, EXOSC8 and EXOSC9; within the complex interacts with EXOSC3, EXOSC8, and EXOSC9. The catalytically inactive RNA exosome core complex (Exo-9) associates with the catalytic subunit EXOSC10/RRP6. Exo-9 may associate with DIS3 to form the nucleolar exosome complex, or DIS3L to form the cytoplasmic exosome complex. Exo-9 is formed by a hexameric base ring consisting of the heterodimers EXOSC4-EXOSC9, EXOSC5-EXOSC8 and EXOSC6-EXOSC7, and a cap ring consisting of EXOSC1, EXOSC2 and EXOSC3. The RNA exosome complex associates with cofactors C1D/RRP47, MPHOSPH6/MPP6 and MTREX/MTR4. Interacts with GTPBP1. Interacts with ZC3HAV1. Interacts with DDX17 only in the presence of ZC3HAV1 in an RNA-independent manner.

It is found in the nucleus. The protein resides in the nucleolus. It localises to the cytoplasm. Non-catalytic component of the RNA exosome complex which has 3'-&gt;5' exoribonuclease activity and participates in a multitude of cellular RNA processing and degradation events. In the nucleus, the RNA exosome complex is involved in proper maturation of stable RNA species such as rRNA, snRNA and snoRNA, in the elimination of RNA processing by-products and non-coding 'pervasive' transcripts, such as antisense RNA species and promoter-upstream transcripts (PROMPTs), and of mRNAs with processing defects, thereby limiting or excluding their export to the cytoplasm. The RNA exosome may be involved in Ig class switch recombination (CSR) and/or Ig variable region somatic hypermutation (SHM) by targeting AICDA deamination activity to transcribed dsDNA substrates. In the cytoplasm, the RNA exosome complex is involved in general mRNA turnover and specifically degrades inherently unstable mRNAs containing AU-rich elements (AREs) within their 3' untranslated regions, and in RNA surveillance pathways, preventing translation of aberrant mRNAs. It seems to be involved in degradation of histone mRNA. The catalytic inactive RNA exosome core complex of 9 subunits (Exo-9) is proposed to play a pivotal role in the binding and presentation of RNA for ribonucleolysis, and to serve as a scaffold for the association with catalytic subunits and accessory proteins or complexes. In vitro, EXOSC5 does not bind or digest single-stranded RNA and binds to double-stranded DNA without detectable DNase activity. This is Exosome complex component RRP46 (Exosc5) from Mus musculus (Mouse).